Reading from the N-terminus, the 279-residue chain is Oxygen-dependent coproporphyrinogen-III oxidase (279 aa).

Position 102 (S102) interacts with substrate. Residues H106 and H116 each contribute to the a divalent metal cation site. H116 acts as the Proton donor in catalysis. 118 to 120 (NTR) contributes to the substrate binding site. A divalent metal cation contacts are provided by H149 and H179. The tract at residues 244-279 (YVEFNLLYDRGTKFGLMTDGNIEAILMSLPPVVKFN) is important for dimerization.

The protein belongs to the aerobic coproporphyrinogen-III oxidase family. As to quaternary structure, homodimer. It depends on a divalent metal cation as a cofactor.

It is found in the cytoplasm. It catalyses the reaction coproporphyrinogen III + O2 + 2 H(+) = protoporphyrinogen IX + 2 CO2 + 2 H2O. It participates in porphyrin-containing compound metabolism; protoporphyrin-IX biosynthesis; protoporphyrinogen-IX from coproporphyrinogen-III (O2 route): step 1/1. Functionally, involved in the heme biosynthesis. Catalyzes the aerobic oxidative decarboxylation of propionate groups of rings A and B of coproporphyrinogen-III to yield the vinyl groups in protoporphyrinogen-IX. The protein is Oxygen-dependent coproporphyrinogen-III oxidase of Rickettsia typhi (strain ATCC VR-144 / Wilmington).